The primary structure comprises 61 residues: Short neurotoxin 1 (61 aa).

Cystine bridges form between C3-C23, C17-C40, C42-C53, and C54-C59.

The protein belongs to the three-finger toxin family. Short-chain subfamily. Type I alpha-neurotoxin sub-subfamily. As to expression, expressed by the venom gland.

Its subcellular location is the secreted. Binds to muscle nicotinic acetylcholine receptor (nAChR) and inhibit acetylcholine from binding to the receptor, thereby impairing neuromuscular transmission. The protein is Short neurotoxin 1 of Naja samarensis (Peters' cobra).